A 393-amino-acid chain; its full sequence is Formate-dependent phosphoribosylglycinamide formyltransferase (393 aa).

Residues E15–L16 and E75 each bind N(1)-(5-phospho-beta-D-ribosyl)glycinamide. ATP is bound by residues R107, K148, S153–Q158, E188–I191, and E196. The 191-residue stretch at N112–L302 folds into the ATP-grasp domain. 2 residues coordinate Mg(2+): E261 and E273. Residues D280, K350, and R357–R358 each bind N(1)-(5-phospho-beta-D-ribosyl)glycinamide.

This sequence belongs to the PurK/PurT family. In terms of assembly, homodimer.

The enzyme catalyses N(1)-(5-phospho-beta-D-ribosyl)glycinamide + formate + ATP = N(2)-formyl-N(1)-(5-phospho-beta-D-ribosyl)glycinamide + ADP + phosphate + H(+). Its pathway is purine metabolism; IMP biosynthesis via de novo pathway; N(2)-formyl-N(1)-(5-phospho-D-ribosyl)glycinamide from N(1)-(5-phospho-D-ribosyl)glycinamide (formate route): step 1/1. Functionally, involved in the de novo purine biosynthesis. Catalyzes the transfer of formate to 5-phospho-ribosyl-glycinamide (GAR), producing 5-phospho-ribosyl-N-formylglycinamide (FGAR). Formate is provided by PurU via hydrolysis of 10-formyl-tetrahydrofolate. The chain is Formate-dependent phosphoribosylglycinamide formyltransferase from Prochlorococcus marinus (strain SARG / CCMP1375 / SS120).